A 123-amino-acid polypeptide reads, in one-letter code: Phosphoribosyl-AMP cyclohydrolase (123 aa).

Aspartate 76 provides a ligand contact to Mg(2+). Cysteine 77 lines the Zn(2+) pocket. The Mg(2+) site is built by aspartate 78 and aspartate 80. Positions 93 and 100 each coordinate Zn(2+).

This sequence belongs to the PRA-CH family. Homodimer. The cofactor is Mg(2+). Zn(2+) is required as a cofactor.

Its subcellular location is the cytoplasm. It carries out the reaction 1-(5-phospho-beta-D-ribosyl)-5'-AMP + H2O = 1-(5-phospho-beta-D-ribosyl)-5-[(5-phospho-beta-D-ribosylamino)methylideneamino]imidazole-4-carboxamide. It participates in amino-acid biosynthesis; L-histidine biosynthesis; L-histidine from 5-phospho-alpha-D-ribose 1-diphosphate: step 3/9. Its function is as follows. Catalyzes the hydrolysis of the adenine ring of phosphoribosyl-AMP. The protein is Phosphoribosyl-AMP cyclohydrolase of Methanocorpusculum labreanum (strain ATCC 43576 / DSM 4855 / Z).